Consider the following 608-residue polypeptide: Aspartate--tRNA(Asp/Asn) ligase (608 aa).

Residue Glu-175 coordinates L-aspartate. The segment at 199–202 (QLFK) is aspartate. Arg-221 serves as a coordination point for L-aspartate. Residues 221-223 (RDE) and Gln-230 each bind ATP. An L-aspartate-binding site is contributed by His-453. An ATP-binding site is contributed by Glu-487. Position 494 (Arg-494) interacts with L-aspartate. Residue 539–542 (GWDR) participates in ATP binding. The disordered stretch occupies residues 566–608 (IDPLTDAPAAITPQQRKEAGIDAKPKPKAEAQAEAQAEESAEK). The segment covering 580 to 596 (QRKEAGIDAKPKPKAEA) has biased composition (basic and acidic residues).

This sequence belongs to the class-II aminoacyl-tRNA synthetase family. Type 1 subfamily. Homodimer.

Its subcellular location is the cytoplasm. The enzyme catalyses tRNA(Asx) + L-aspartate + ATP = L-aspartyl-tRNA(Asx) + AMP + diphosphate. Aspartyl-tRNA synthetase with relaxed tRNA specificity since it is able to aspartylate not only its cognate tRNA(Asp) but also tRNA(Asn). Reaction proceeds in two steps: L-aspartate is first activated by ATP to form Asp-AMP and then transferred to the acceptor end of tRNA(Asp/Asn). In Corynebacterium glutamicum (strain ATCC 13032 / DSM 20300 / JCM 1318 / BCRC 11384 / CCUG 27702 / LMG 3730 / NBRC 12168 / NCIMB 10025 / NRRL B-2784 / 534), this protein is Aspartate--tRNA(Asp/Asn) ligase.